We begin with the raw amino-acid sequence, 167 residues long: NAD(P)H-quinone oxidoreductase subunit I, chloroplastic (167 aa).

4Fe-4S ferredoxin-type domains follow at residues 55-84 and 95-124; these read GRIHFEFDKCIACEVCVRVCPIDLPVVDWK and LNYSIDFGICIFCGNCVEYCPTNCLSMTEE. Residues Cys-64, Cys-67, Cys-70, Cys-74, Cys-104, Cys-107, Cys-110, and Cys-114 each contribute to the [4Fe-4S] cluster site.

This sequence belongs to the complex I 23 kDa subunit family. In terms of assembly, NDH is composed of at least 16 different subunits, 5 of which are encoded in the nucleus. The cofactor is [4Fe-4S] cluster.

It is found in the plastid. The protein localises to the chloroplast thylakoid membrane. It carries out the reaction a plastoquinone + NADH + (n+1) H(+)(in) = a plastoquinol + NAD(+) + n H(+)(out). The catalysed reaction is a plastoquinone + NADPH + (n+1) H(+)(in) = a plastoquinol + NADP(+) + n H(+)(out). Functionally, NDH shuttles electrons from NAD(P)H:plastoquinone, via FMN and iron-sulfur (Fe-S) centers, to quinones in the photosynthetic chain and possibly in a chloroplast respiratory chain. The immediate electron acceptor for the enzyme in this species is believed to be plastoquinone. Couples the redox reaction to proton translocation, and thus conserves the redox energy in a proton gradient. The protein is NAD(P)H-quinone oxidoreductase subunit I, chloroplastic of Atropa belladonna (Belladonna).